Here is a 188-residue protein sequence, read N- to C-terminus: Elongation factor P (188 aa).

Residues 139–163 (PVTKGQTASSSYKPATLSNGVRTQV) form a disordered region. Residues 142–160 (KGQTASSSYKPATLSNGVR) are compositionally biased toward polar residues.

The protein belongs to the elongation factor P family.

It is found in the cytoplasm. Its pathway is protein biosynthesis; polypeptide chain elongation. Involved in peptide bond synthesis. Stimulates efficient translation and peptide-bond synthesis on native or reconstituted 70S ribosomes in vitro. Probably functions indirectly by altering the affinity of the ribosome for aminoacyl-tRNA, thus increasing their reactivity as acceptors for peptidyl transferase. The chain is Elongation factor P from Methylobacterium nodulans (strain LMG 21967 / CNCM I-2342 / ORS 2060).